The primary structure comprises 2294 residues: Protein Ycf2 (2294 aa).

An ATP-binding site is contributed by 1648 to 1655; it reads GSIGTGRS.

This sequence belongs to the Ycf2 family.

The protein resides in the plastid. Its subcellular location is the chloroplast stroma. Its function is as follows. Probable ATPase of unknown function. Its presence in a non-photosynthetic plant (Epifagus virginiana) and experiments in tobacco indicate that it has an essential function which is probably not related to photosynthesis. The polypeptide is Protein Ycf2 (Arabidopsis thaliana (Mouse-ear cress)).